The following is a 354-amino-acid chain: Isopentenyl-diphosphate delta-isomerase (354 aa).

Substrate is bound at residue 11–12; it reads KK. FMN contacts are provided by residues Ser67, 68–70, Ser98, and Asn126; that span reads SMT. 98 to 100 is a substrate binding site; sequence SFK. Substrate is bound at residue Gln160. Glu161 is a Mg(2+) binding site. FMN-binding positions include Lys192, Thr222, and 289-290; that span reads AA.

The protein belongs to the IPP isomerase type 2 family. As to quaternary structure, homooctamer. Dimer of tetramers. FMN serves as cofactor. It depends on NADPH as a cofactor. Requires Mg(2+) as cofactor.

The protein resides in the cytoplasm. The enzyme catalyses isopentenyl diphosphate = dimethylallyl diphosphate. Functionally, involved in the biosynthesis of isoprenoids. Catalyzes the 1,3-allylic rearrangement of the homoallylic substrate isopentenyl (IPP) to its allylic isomer, dimethylallyl diphosphate (DMAPP). The protein is Isopentenyl-diphosphate delta-isomerase of Borreliella afzelii (strain PKo) (Borrelia afzelii).